Here is a 556-residue protein sequence, read N- to C-terminus: Putative D-arabinono-1,4-lactone oxidase (556 aa).

One can recognise an FAD-binding PCMH-type domain in the interval 47-217 (FTSLPELYIQ…TEVTFKAVPA (171 aa)). His84 is modified (pros-8alpha-FAD histidine).

Belongs to the oxygen-dependent FAD-linked oxidoreductase family. Requires FAD as cofactor.

It is found in the mitochondrion membrane. The catalysed reaction is D-arabinono-1,4-lactone + O2 = dehydro-D-arabinono-1,4-lactone + H2O2 + H(+). It functions in the pathway cofactor biosynthesis; D-erythroascorbate biosynthesis; dehydro-D-arabinono-1,4-lactone from D-arabinose: step 2/2. The sequence is that of Putative D-arabinono-1,4-lactone oxidase (alo-1) from Neurospora crassa (strain ATCC 24698 / 74-OR23-1A / CBS 708.71 / DSM 1257 / FGSC 987).